Reading from the N-terminus, the 155-residue chain is Endoribonuclease YbeY (155 aa).

3 residues coordinate Zn(2+): His-114, His-118, and His-124.

It belongs to the endoribonuclease YbeY family. Zn(2+) serves as cofactor.

It localises to the cytoplasm. In terms of biological role, single strand-specific metallo-endoribonuclease involved in late-stage 70S ribosome quality control and in maturation of the 3' terminus of the 16S rRNA. The sequence is that of Endoribonuclease YbeY from Escherichia coli O17:K52:H18 (strain UMN026 / ExPEC).